An 83-amino-acid chain; its full sequence is uncharacterized protein (83 aa).

This sequence belongs to the UPF0440 family.

This is an uncharacterized protein from Natronomonas pharaonis (strain ATCC 35678 / DSM 2160 / CIP 103997 / JCM 8858 / NBRC 14720 / NCIMB 2260 / Gabara) (Halobacterium pharaonis).